The primary structure comprises 804 residues: Probable replication endonuclease from prophage-like region 1 (804 aa).

Catalysis depends on O-(5'-phospho-DNA)-tyrosine intermediate residues tyrosine 498 and tyrosine 502.

Belongs to the phage GPA family.

Its function is as follows. Possible endonuclease which induces a single-strand cut and initiates DNA replication. The chain is Probable replication endonuclease from prophage-like region 1 from Salmonella typhi.